A 337-amino-acid chain; its full sequence is Alanine racemase (337 aa).

The active-site Proton acceptor; specific for D-alanine is K33. N6-(pyridoxal phosphate)lysine is present on K33. R118 contacts substrate. Y246 serves as the catalytic Proton acceptor; specific for L-alanine. M292 is a substrate binding site.

The protein belongs to the alanine racemase family. The cofactor is pyridoxal 5'-phosphate.

It carries out the reaction L-alanine = D-alanine. It functions in the pathway amino-acid biosynthesis; D-alanine biosynthesis; D-alanine from L-alanine: step 1/1. Functionally, catalyzes the interconversion of L-alanine and D-alanine. May also act on other amino acids. The protein is Alanine racemase (alr) of Campylobacter curvus (strain 525.92).